The primary structure comprises 63 residues: Cytochrome c oxidase subunit 7C, mitochondrial (63 aa).

Residues 1–16 (MLGQSIRRFTTSVVRR) constitute a mitochondrion transit peptide. The Mitochondrial matrix portion of the chain corresponds to 17–33 (SHYEEGPGKNLPFSVEN). At Lys-25 the chain carries N6-acetyllysine; alternate. N6-succinyllysine; alternate is present on Lys-25. A helical transmembrane segment spans residues 34–60 (KWRLLAMMTLYFGSGFAAPFFIVRHQL). Residues 61-63 (LKK) are Mitochondrial intermembrane-facing.

This sequence belongs to the cytochrome c oxidase VIIc family. As to quaternary structure, component of the cytochrome c oxidase (complex IV, CIV), a multisubunit enzyme composed of 14 subunits. The complex is composed of a catalytic core of 3 subunits MT-CO1, MT-CO2 and MT-CO3, encoded in the mitochondrial DNA, and 11 supernumerary subunits COX4I, COX5A, COX5B, COX6A, COX6B, COX6C, COX7A, COX7B, COX7C, COX8 and NDUFA4, which are encoded in the nuclear genome. The complex exists as a monomer or a dimer and forms supercomplexes (SCs) in the inner mitochondrial membrane with NADH-ubiquinone oxidoreductase (complex I, CI) and ubiquinol-cytochrome c oxidoreductase (cytochrome b-c1 complex, complex III, CIII), resulting in different assemblies (supercomplex SCI(1)III(2)IV(1) and megacomplex MCI(2)III(2)IV(2)). Interacts with RAB5IF.

It is found in the mitochondrion inner membrane. It functions in the pathway energy metabolism; oxidative phosphorylation. Its function is as follows. Component of the cytochrome c oxidase, the last enzyme in the mitochondrial electron transport chain which drives oxidative phosphorylation. The respiratory chain contains 3 multisubunit complexes succinate dehydrogenase (complex II, CII), ubiquinol-cytochrome c oxidoreductase (cytochrome b-c1 complex, complex III, CIII) and cytochrome c oxidase (complex IV, CIV), that cooperate to transfer electrons derived from NADH and succinate to molecular oxygen, creating an electrochemical gradient over the inner membrane that drives transmembrane transport and the ATP synthase. Cytochrome c oxidase is the component of the respiratory chain that catalyzes the reduction of oxygen to water. Electrons originating from reduced cytochrome c in the intermembrane space (IMS) are transferred via the dinuclear copper A center (CU(A)) of subunit 2 and heme A of subunit 1 to the active site in subunit 1, a binuclear center (BNC) formed by heme A3 and copper B (CU(B)). The BNC reduces molecular oxygen to 2 water molecules using 4 electrons from cytochrome c in the IMS and 4 protons from the mitochondrial matrix. The polypeptide is Cytochrome c oxidase subunit 7C, mitochondrial (COX7C) (Sus scrofa (Pig)).